Reading from the N-terminus, the 203-residue chain is NADH-quinone oxidoreductase subunit C (203 aa).

Belongs to the complex I 30 kDa subunit family. NDH-1 is composed of 14 different subunits. Subunits NuoB, C, D, E, F, and G constitute the peripheral sector of the complex.

The protein localises to the cell inner membrane. It carries out the reaction a quinone + NADH + 5 H(+)(in) = a quinol + NAD(+) + 4 H(+)(out). Functionally, NDH-1 shuttles electrons from NADH, via FMN and iron-sulfur (Fe-S) centers, to quinones in the respiratory chain. The immediate electron acceptor for the enzyme in this species is believed to be ubiquinone. Couples the redox reaction to proton translocation (for every two electrons transferred, four hydrogen ions are translocated across the cytoplasmic membrane), and thus conserves the redox energy in a proton gradient. In Polaromonas sp. (strain JS666 / ATCC BAA-500), this protein is NADH-quinone oxidoreductase subunit C.